The primary structure comprises 197 residues: Glycerol-3-phosphate acyltransferase (197 aa).

6 consecutive transmembrane segments (helical) span residues 1 to 21 (MNIL…GFLI), 50 to 70 (WPAL…VKIA), 77 to 97 (GLIE…PIWL), 111 to 131 (MFLA…LIVL), 137 to 157 (VSLS…FYLG), and 158 to 178 (KFMH…IWKH).

It belongs to the PlsY family. Probably interacts with PlsX.

The protein localises to the cell inner membrane. The catalysed reaction is an acyl phosphate + sn-glycerol 3-phosphate = a 1-acyl-sn-glycero-3-phosphate + phosphate. The protein operates within lipid metabolism; phospholipid metabolism. Its function is as follows. Catalyzes the transfer of an acyl group from acyl-phosphate (acyl-PO(4)) to glycerol-3-phosphate (G3P) to form lysophosphatidic acid (LPA). This enzyme utilizes acyl-phosphate as fatty acyl donor, but not acyl-CoA or acyl-ACP. This is Glycerol-3-phosphate acyltransferase from Prochlorococcus marinus (strain MIT 9301).